The sequence spans 903 residues: Dual 3',5'-cyclic-AMP and -GMP phosphodiesterase 11A (903 aa).

GAF domains lie at 175-324 (DLTS…GIAI) and 356-512 (DLEK…GLGI). A 3',5'-cyclic GMP-binding site is contributed by serine 378. One can recognise a PDEase domain in the interval 542–866 (SKTEVDKFKA…VKWEELDKKR (325 aa)). The active-site Proton donor is histidine 618. Positions 622, 658, 659, and 770 each coordinate a divalent metal cation. A disordered region spans residues 863-903 (DKKRQHDHGASVPASPCSAAEGSETGGVPCCSNNTPPTHVS). Residues 893–903 (CSNNTPPTHVS) show a composition bias toward polar residues.

It belongs to the cyclic nucleotide phosphodiesterase family. It depends on a divalent metal cation as a cofactor.

It is found in the cytoplasm. Its subcellular location is the cytosol. It carries out the reaction 3',5'-cyclic GMP + H2O = GMP + H(+). It catalyses the reaction 3',5'-cyclic AMP + H2O = AMP + H(+). Functionally, plays a role in signal transduction by regulating the intracellular concentration of cyclic nucleotides cAMP and cGMP. Catalyzes the hydrolysis of both cAMP and cGMP to 5'-AMP and 5'-GMP, respectively. In Takifugu rubripes (Japanese pufferfish), this protein is Dual 3',5'-cyclic-AMP and -GMP phosphodiesterase 11A (pde11a).